We begin with the raw amino-acid sequence, 248 residues long: Segregation and condensation protein A (248 aa).

This sequence belongs to the ScpA family. In terms of assembly, component of a cohesin-like complex composed of ScpA, ScpB and the Smc homodimer, in which ScpA and ScpB bind to the head domain of Smc. The presence of the three proteins is required for the association of the complex with DNA.

Its subcellular location is the cytoplasm. Functionally, participates in chromosomal partition during cell division. May act via the formation of a condensin-like complex containing Smc and ScpB that pull DNA away from mid-cell into both cell halves. The sequence is that of Segregation and condensation protein A from Clostridium perfringens (strain SM101 / Type A).